We begin with the raw amino-acid sequence, 344 residues long: Melanocyte-stimulating hormone receptor (344 aa).

Topologically, residues 1 to 37 (MPMQGAQRKLLGSLNSTPTATSNPGLAANHTGAPCLE) are extracellular. Asparagine 29 carries N-linked (GlcNAc...) asparagine glycosylation. Residues 38-63 (VSIPDGLFLSLGLVSLVENVLVVAAI) traverse the membrane as a helical segment. Over 64-72 (AKNRNLHSS) the chain is Cytoplasmic. Residues 73–93 (MYXFICCLALSDLLVSGSNML) traverse the membrane as a helical segment. At 94–118 (ETAIILLLEAGTLATRASVVQQLHN) the chain is on the extracellular side. The helical transmembrane segment at 119–140 (TIDVLTCSSMLCSLCFLGAIAV) threads the bilayer. At 141–163 (DRYISIFYALRYHSIMTLPRAQR) the chain is on the cytoplasmic side. Residues 164-183 (AIAAIWVASVLSSTLFITYY) form a helical membrane-spanning segment. Topologically, residues 184 to 191 (DHAAVLLC) are extracellular. The chain crosses the membrane as a helical span at residues 192–211 (LVVFFLAMLVLMAVLYVHML). Over 212–240 (ARACQHAQGIIRLHNRQLPAHKGFGLRGA) the chain is Cytoplasmic. A helical transmembrane segment spans residues 241–266 (ATLTILLGIFFLCWGPFFLHLTLVVF). Residues 267–279 (CPQHLTCNCIFKN) lie on the Extracellular side of the membrane. A helical membrane pass occupies residues 280–300 (FKVFLTLIICNTIIDPLIYAF). Residues 301–344 (RSQELRRTLKEVLLCSSWPGCWAEGGGDSVWPGSCVTLRGPLPP) lie on the Cytoplasmic side of the membrane. Residue cysteine 315 is the site of S-palmitoyl cysteine attachment.

Belongs to the G-protein coupled receptor 1 family. As to quaternary structure, interacts with MGRN1, but does not undergo MGRN1-mediated ubiquitination; this interaction competes with GNAS-binding and thus inhibits agonist-induced cAMP production. Interacts with OPN3; the interaction results in a decrease in MC1R-mediated cAMP signaling and ultimately a decrease in melanin production in melanocytes.

The protein localises to the cell membrane. Its function is as follows. Receptor for MSH (alpha, beta and gamma) and ACTH. The activity of this receptor is mediated by G proteins which activate adenylate cyclase. Mediates melanogenesis, the production of eumelanin (black/brown) and phaeomelanin (red/yellow), via regulation of cAMP signaling in melanocytes. The polypeptide is Melanocyte-stimulating hormone receptor (MC1R) (Callithrix geoffroyi (Geoffroy's marmoset)).